The primary structure comprises 263 residues: uncharacterized protein (263 aa).

Belongs to the flavoredoxin family. FMN serves as cofactor.

This is an uncharacterized protein from Aeropyrum pernix (strain ATCC 700893 / DSM 11879 / JCM 9820 / NBRC 100138 / K1).